We begin with the raw amino-acid sequence, 46 residues long: LNLGVGAYREYLPIEGLAAFNKVATVQGLSGTGSLRQALYDSISSK.

The protein belongs to the class-I pyridoxal-phosphate-dependent aminotransferase family. Homodimer. It depends on pyridoxal 5'-phosphate as a cofactor.

It carries out the reaction L-aspartate + 2-oxoglutarate = oxaloacetate + L-glutamate. Important for the metabolism of amino acids and Krebs-cycle related organic acids. In plants, it is involved in nitrogen metabolism and in aspects of carbon and energy metabolism. In Pseudotsuga menziesii (Douglas-fir), this protein is Aspartate aminotransferase 1.